The following is a 156-amino-acid chain: RNA polymerase sigma factor SigS (156 aa).

The Polymerase core binding motif lies at 29 to 44 (EYYQLLLIKMWQLSQI). The H-T-H motif DNA-binding region spans 126–145 (QFEIAEIMSLSLSTIKLIKM).

Belongs to the sigma-70 factor family.

Sigma factors are initiation factors that promote the attachment of RNA polymerase to specific initiation sites and are then released. Sigma-S contributes to the protection against external stress, thus playing a role in cellular fitness and survival. The chain is RNA polymerase sigma factor SigS (sigS) from Staphylococcus aureus (strain Mu50 / ATCC 700699).